A 380-amino-acid chain; its full sequence is MALNLRKNHPLLKIINDSLIDLPTPSNISIWWNFGSLLGICLVTQIITGLLLAAHYTADTSLAFNSVAHMCRNVQFGWLIRNLHANGASLFFICIYLHIGRGFYYGSYLNKETWNIGVILLLTLMATAFVGYVLPWGQMSFWGATVITNLFSAIPYIGQTLVEWAWGGFSVDNPTLTRFFALHFLLPFVIAGLTLVHLTFLHETGSNNPLGIPSDCDKIPFHPYYSIKDILGFALMLISLATLALFSPNLLGDPENFTPANPLATPPHIKPEWYFLFAYAILRSIPNKLGGVLALAASVLILFLIPLLHTSKQRSMTFRPLSQILFWILVTDLLILTWVGSQPVEHPFIIIGQLASFSYFMIILVLFPIVGALENKLLNL.

4 helical membrane passes run 34–54 (FGSLLGICLVTQIITGLLLAA), 78–99 (WLIRNLHANGASLFFICIYLHI), 114–134 (WNIGVILLLTLMATAFVGYVL), and 179–199 (FFALHFLLPFVIAGLTLVHLT). Histidine 84 and histidine 98 together coordinate heme b. Histidine 183 and histidine 197 together coordinate heme b. Histidine 202 lines the a ubiquinone pocket. 4 helical membrane passes run 227–247 (IKDILGFALMLISLATLALFS), 289–309 (LGGVLALAASVLILFLIPLLH), 321–341 (LSQILFWILVTDLLILTWVGS), and 348–368 (FIIIGQLASFSYFMIILVLFP).

It belongs to the cytochrome b family. As to quaternary structure, the cytochrome bc1 complex contains 11 subunits: 3 respiratory subunits (MT-CYB, CYC1 and UQCRFS1), 2 core proteins (UQCRC1 and UQCRC2) and 6 low-molecular weight proteins (UQCRH/QCR6, UQCRB/QCR7, UQCRQ/QCR8, UQCR10/QCR9, UQCR11/QCR10 and a cleavage product of UQCRFS1). This cytochrome bc1 complex then forms a dimer. Requires heme b as cofactor.

Its subcellular location is the mitochondrion inner membrane. Functionally, component of the ubiquinol-cytochrome c reductase complex (complex III or cytochrome b-c1 complex) that is part of the mitochondrial respiratory chain. The b-c1 complex mediates electron transfer from ubiquinol to cytochrome c. Contributes to the generation of a proton gradient across the mitochondrial membrane that is then used for ATP synthesis. This Paradisaea rubra (Red bird of paradise) protein is Cytochrome b (MT-CYB).